A 328-amino-acid polypeptide reads, in one-letter code: Cytochrome f (328 aa).

The first 44 residues, 1 to 44, serve as a signal peptide directing secretion; sequence MRNPDTLGLWTKTMVALRRFTVLAIATVSVFLITDLGLPQAASA. Heme-binding residues include Tyr45, Cys66, Cys69, and His70. The helical transmembrane segment at 296-313 threads the bilayer; that stretch reads FLVLFLAGIMLSQILLVL.

It belongs to the cytochrome f family. As to quaternary structure, the 4 large subunits of the cytochrome b6-f complex are cytochrome b6, subunit IV (17 kDa polypeptide, PetD), cytochrome f and the Rieske protein, while the 4 small subunits are PetG, PetL, PetM and PetN. The complex functions as a dimer. It depends on heme as a cofactor.

It localises to the cellular thylakoid membrane. Its function is as follows. Component of the cytochrome b6-f complex, which mediates electron transfer between photosystem II (PSII) and photosystem I (PSI), cyclic electron flow around PSI, and state transitions. This Synechocystis sp. (strain ATCC 27184 / PCC 6803 / Kazusa) protein is Cytochrome f (petA).